The sequence spans 217 residues: Large ribosomal subunit protein uL3 (217 aa).

The span at glycine 134–valine 146 shows a compositional bias: polar residues. Residues glycine 134–glutamine 154 are disordered. Position 154 is an N5-methylglutamine (glutamine 154).

The protein belongs to the universal ribosomal protein uL3 family. In terms of assembly, part of the 50S ribosomal subunit. Forms a cluster with proteins L14 and L19. Methylated by PrmB.

Functionally, one of the primary rRNA binding proteins, it binds directly near the 3'-end of the 23S rRNA, where it nucleates assembly of the 50S subunit. This Burkholderia lata (strain ATCC 17760 / DSM 23089 / LMG 22485 / NCIMB 9086 / R18194 / 383) protein is Large ribosomal subunit protein uL3.